Consider the following 897-residue polypeptide: Pre-mRNA-splicing factor CWC22 homolog (897 aa).

Residues 1–10 show a composition bias toward polar residues; it reads MSSSRSQSPE. A disordered region spans residues 1–155; sequence MSSSRSQSPE…EKKKKEPLDI (155 aa). Composition is skewed to basic and acidic residues over residues 36 to 54, 93 to 107, and 131 to 155; these read SSEK…REVS, RSKE…EKSP, and RSSE…PLDI. The MIF4G domain maps to 194–382; it reads KKKIHGLVNR…ETAMQIRKDK (189 aa). A disordered region spans residues 444-472; it reads NADISDEDGGDELDDEEEGSDVEEAPKKT. Residues 447–466 are compositionally biased toward acidic residues; sequence ISDEDGGDELDDEEEGSDVE. Residues 485-601 form the MI domain; sequence AFRREVYLTM…DWKILADMKM (117 aa). Low complexity-rich tracts occupy residues 689-710 and 720-730; these read LDQL…SDSS and DSSSDSSSSSE. The tract at residues 689-897 is disordered; sequence LDQLKAESSS…VESDDRRRRR (209 aa). The segment covering 743–897 has biased composition (basic and acidic residues); the sequence is NSEESSKKKE…VESDDRRRRR (155 aa).

The protein belongs to the CWC22 family. In terms of tissue distribution, expressed in germ cells, oocytes, and sperm cells.

The protein resides in the nucleus. The protein localises to the nucleus speckle. Functionally, required for pre-mRNA splicing and for exon-junction complex (EJC) assembly. Hinders EIF4A3 from non-specifically binding RNA and escorts it to the splicing machinery to promote EJC assembly on mature mRNAs. Through its role in EJC assembly, required for nonsense-mediated mRNA decay. Plays a role in the nuclear retention of unspliced mRNAs. Plays a role in sex determination. Required for early embryogenesis and tissue differentiation. The chain is Pre-mRNA-splicing factor CWC22 homolog from Caenorhabditis elegans.